We begin with the raw amino-acid sequence, 279 residues long: Movement protein (279 aa).

It belongs to the cucumovirus movement protein family.

Its subcellular location is the host cell junction. It is found in the host plasmodesma. Transports viral genome to neighboring plant cells directly through plasmosdesmata, without any budding. The movement protein allows efficient cell to cell propagation, by bypassing the host cell wall barrier. Acts by forming a tubular structure at the host plasmodesmata, enlarging it enough to allow free passage of virion capsids. This is Movement protein from Cucumber mosaic virus (strain Ixora) (CMV).